A 92-amino-acid chain; its full sequence is Elongation factor 1-beta (92 aa).

It belongs to the EF-1-beta/EF-1-delta family.

In terms of biological role, promotes the exchange of GDP for GTP in EF-1-alpha/GDP, thus allowing the regeneration of EF-1-alpha/GTP that could then be used to form the ternary complex EF-1-alpha/GTP/AAtRNA. The chain is Elongation factor 1-beta (ef1b) from Pyrobaculum aerophilum (strain ATCC 51768 / DSM 7523 / JCM 9630 / CIP 104966 / NBRC 100827 / IM2).